A 148-amino-acid chain; its full sequence is Aspartate 1-decarboxylase (148 aa).

The active-site Schiff-base intermediate with substrate; via pyruvic acid is S25. Position 25 is a pyruvic acid (Ser) (S25). A substrate-binding site is contributed by T57. Y58 acts as the Proton donor in catalysis. 73–75 (GAA) lines the substrate pocket.

This sequence belongs to the PanD family. Heterooctamer of four alpha and four beta subunits. The cofactor is pyruvate. Post-translationally, is synthesized initially as an inactive proenzyme, which is activated by self-cleavage at a specific serine bond to produce a beta-subunit with a hydroxyl group at its C-terminus and an alpha-subunit with a pyruvoyl group at its N-terminus.

The protein localises to the cytoplasm. It catalyses the reaction L-aspartate + H(+) = beta-alanine + CO2. The protein operates within cofactor biosynthesis; (R)-pantothenate biosynthesis; beta-alanine from L-aspartate: step 1/1. Its function is as follows. Catalyzes the pyruvoyl-dependent decarboxylation of aspartate to produce beta-alanine. This is Aspartate 1-decarboxylase from Rhodococcus erythropolis (strain PR4 / NBRC 100887).